Reading from the N-terminus, the 276-residue chain is MFVPFLIMLREGLEAALIVSLIASYLKRTQRGRWIGVMWIGVLLAAALCLGLGIFINETTGEFPQKEQELFEGIVAVIAVVILTWMVFWMRKVSRNVKVQLEQAVDSALQRGNHHGWALVMMVFFAVAREGLESVFFLLAAFQQDVGIWPPLGAMLGLATAVVLGFLLYWGGIRLNLGAFFKWTSLFILFVAAGLAAGAIRAFHEAGLWNHFQEIAFDMSAVLSTHSLFGTLMEGIFGYQEAPSVSEVAVWFIYLIPALVAFVLPPRAGATASRSV.

Position 1 (methionine 1) is a topological domain, periplasmic. Residues 2–22 (FVPFLIMLREGLEAALIVSLI) traverse the membrane as a helical segment. Residues 23–34 (ASYLKRTQRGRW) are Cytoplasmic-facing. A helical membrane pass occupies residues 35–55 (IGVMWIGVLLAAALCLGLGIF). Over 56-69 (INETTGEFPQKEQE) the chain is Periplasmic. The helical transmembrane segment at 70–90 (LFEGIVAVIAVVILTWMVFWM) threads the bilayer. At 91 to 118 (RKVSRNVKVQLEQAVDSALQRGNHHGWA) the chain is on the cytoplasmic side. The helical transmembrane segment at 119–139 (LVMMVFFAVAREGLESVFFLL) threads the bilayer. Residues 140–147 (AAFQQDVG) are Periplasmic-facing. Residues 148-168 (IWPPLGAMLGLATAVVLGFLL) traverse the membrane as a helical segment. The Cytoplasmic portion of the chain corresponds to 169–179 (YWGGIRLNLGA). Residues 180-200 (FFKWTSLFILFVAAGLAAGAI) traverse the membrane as a helical segment. Residues 201 to 244 (RAFHEAGLWNHFQEIAFDMSAVLSTHSLFGTLMEGIFGYQEAPS) lie on the Periplasmic side of the membrane. The helical transmembrane segment at 245-265 (VSEVAVWFIYLIPALVAFVLP) threads the bilayer. The Cytoplasmic segment spans residues 266–276 (PRAGATASRSV).

This sequence belongs to the oxidase-dependent Fe transporter (OFeT) (TC 9.A.10.1) family. Part of a ferrous iron transporter composed of EfeU, EfeO and EfeB.

It is found in the cell inner membrane. In terms of biological role, uptake of Fe(2+) ions across the membrane. The polypeptide is Ferrous iron permease EfeU (efeU) (Escherichia coli O6:K15:H31 (strain 536 / UPEC)).